We begin with the raw amino-acid sequence, 187 residues long: MESLQNHFLIAMPSLDDTFFERTVIYLCEHDEKGAMGLVINKPLGIEVNSLLEQMDLPTEQVSADLAMGSQVLMGGPVSQDRGFVLHTSQPYWANSTELGSGLMLTTSRDVLTAIGSKRSPDKFLVALGYAGWSKNQLEQELADNSWLTIPADHALLFDINHEDRWQQASRSLGFEAWQLSTQAGHA.

Belongs to the UPF0301 (AlgH) family.

This Shewanella oneidensis (strain ATCC 700550 / JCM 31522 / CIP 106686 / LMG 19005 / NCIMB 14063 / MR-1) protein is UPF0301 protein SO_3346.